Consider the following 419-residue polypeptide: Epothilone C/D epoxidase (419 aa).

2 residues coordinate substrate: alanine 180 and glycine 304. Cysteine 365 contributes to the heme binding site.

The protein belongs to the cytochrome P450 family. Requires heme as cofactor.

It catalyses the reaction epothilone C + 2 reduced [2Fe-2S]-[ferredoxin] + O2 + 2 H(+) = epothilone A + 2 oxidized [2Fe-2S]-[ferredoxin] + H2O. The catalysed reaction is epothilone D + 2 reduced [2Fe-2S]-[ferredoxin] + O2 + 2 H(+) = epothilone B + 2 oxidized [2Fe-2S]-[ferredoxin] + H2O. The protein operates within secondary metabolite biosynthesis; epothilone biosynthesis. Functionally, involved in the biosynthesis of epothilones, macrolactones which have a narrow anti-fungal spectrum and microtubule-stabilizing activity. Catalyzes the epoxidation of epothilones C and D to epothilones A and B, respectively. This is Epothilone C/D epoxidase (cyp167A1) from Sorangium cellulosum (Polyangium cellulosum).